The following is a 182-amino-acid chain: Adenine phosphoribosyltransferase (182 aa).

This sequence belongs to the purine/pyrimidine phosphoribosyltransferase family. As to quaternary structure, homodimer.

It is found in the cytoplasm. It carries out the reaction AMP + diphosphate = 5-phospho-alpha-D-ribose 1-diphosphate + adenine. It functions in the pathway purine metabolism; AMP biosynthesis via salvage pathway; AMP from adenine: step 1/1. Its function is as follows. Catalyzes a salvage reaction resulting in the formation of AMP, that is energically less costly than de novo synthesis. This chain is Adenine phosphoribosyltransferase, found in Campylobacter hominis (strain ATCC BAA-381 / DSM 21671 / CCUG 45161 / LMG 19568 / NCTC 13146 / CH001A).